The sequence spans 240 residues: Splicing factor rtf2 (240 aa).

Disordered regions lie at residues 1–22 and 181–240; these read MGND…GKVP and SLNK…RVKI. Residues 185 to 210 show a composition bias toward basic residues; the sequence is ASKKSNKNGDKKRKHVSKSNSKHAKH. Composition is skewed to basic and acidic residues over residues 211–224 and 231–240; these read ELRT…ENVK and DMERVKRVKI.

The protein belongs to the rtf2 family. In terms of assembly, interacts with pcn1.

The protein resides in the nucleus. In terms of biological role, putative splicing factor that is required for the correct splicing of a subset of pre-mRNAs. Required for the correct splicing of rtf1, a replication termination factor that mediates site-specific replication termination at replication barrier RTS1. The sequence is that of Splicing factor rtf2 from Schizosaccharomyces pombe (strain 972 / ATCC 24843) (Fission yeast).